The chain runs to 270 residues: Large ribosomal subunit protein uL10 (270 aa).

A disordered region spans residues Val234–Asp270. Over residues Glu238–Arg250 the composition is skewed to basic and acidic residues. Acidic residues predominate over residues Asp257–Asp270.

The protein belongs to the universal ribosomal protein uL10 family. Associates with the pre-60S ribosomal particle.

The protein localises to the nucleus. The protein resides in the nucleolus. Its subcellular location is the cytoplasm. Component of the ribosome assembly machinery. Nuclear paralog of the ribosomal protein P0, it binds pre-60S subunits at an early stage of assembly in the nucleolus, and is replaced by P0 in cytoplasmic pre-60S subunits and mature 80S ribosomes. This is Large ribosomal subunit protein uL10 from Chaetomium thermophilum (strain DSM 1495 / CBS 144.50 / IMI 039719) (Thermochaetoides thermophila).